Reading from the N-terminus, the 427-residue chain is Peptidase B (427 aa).

Residues Lys-195 and Asp-200 each contribute to the Mn(2+) site. Lys-207 is a catalytic residue. Asp-218, Asp-277, and Glu-279 together coordinate Mn(2+). Arg-281 is an active-site residue.

Belongs to the peptidase M17 family. In terms of assembly, homohexamer. Requires Mn(2+) as cofactor.

The protein resides in the cytoplasm. The catalysed reaction is Release of an N-terminal amino acid, Xaa, from a peptide or arylamide. Xaa is preferably Glu or Asp but may be other amino acids, including Leu, Met, His, Cys and Gln.. Probably plays an important role in intracellular peptide degradation. This chain is Peptidase B, found in Shigella boydii serotype 18 (strain CDC 3083-94 / BS512).